We begin with the raw amino-acid sequence, 370 residues long: Phosphoribosylformylglycinamidine cyclo-ligase (370 aa).

The protein belongs to the AIR synthase family.

It is found in the cytoplasm. The enzyme catalyses 2-formamido-N(1)-(5-O-phospho-beta-D-ribosyl)acetamidine + ATP = 5-amino-1-(5-phospho-beta-D-ribosyl)imidazole + ADP + phosphate + H(+). It participates in purine metabolism; IMP biosynthesis via de novo pathway; 5-amino-1-(5-phospho-D-ribosyl)imidazole from N(2)-formyl-N(1)-(5-phospho-D-ribosyl)glycinamide: step 2/2. The polypeptide is Phosphoribosylformylglycinamidine cyclo-ligase (Rhodospirillum rubrum (strain ATCC 11170 / ATH 1.1.1 / DSM 467 / LMG 4362 / NCIMB 8255 / S1)).